Consider the following 382-residue polypeptide: UDP-4-amino-4-deoxy-L-arabinose--oxoglutarate aminotransferase (382 aa).

Lys182 is subject to N6-(pyridoxal phosphate)lysine.

Belongs to the DegT/DnrJ/EryC1 family. ArnB subfamily. Homodimer. It depends on pyridoxal 5'-phosphate as a cofactor.

It carries out the reaction UDP-4-amino-4-deoxy-beta-L-arabinose + 2-oxoglutarate = UDP-beta-L-threo-pentopyranos-4-ulose + L-glutamate. Its pathway is nucleotide-sugar biosynthesis; UDP-4-deoxy-4-formamido-beta-L-arabinose biosynthesis; UDP-4-deoxy-4-formamido-beta-L-arabinose from UDP-alpha-D-glucuronate: step 2/3. The protein operates within bacterial outer membrane biogenesis; lipopolysaccharide biosynthesis. Its function is as follows. Catalyzes the conversion of UDP-4-keto-arabinose (UDP-Ara4O) to UDP-4-amino-4-deoxy-L-arabinose (UDP-L-Ara4N). The modified arabinose is attached to lipid A and is required for resistance to polymyxin and cationic antimicrobial peptides. The protein is UDP-4-amino-4-deoxy-L-arabinose--oxoglutarate aminotransferase of Pectobacterium carotovorum subsp. carotovorum (strain PC1).